We begin with the raw amino-acid sequence, 110 residues long: UPF0367 protein Syncc9605_2376 (110 aa).

It belongs to the UPF0367 family.

The sequence is that of UPF0367 protein Syncc9605_2376 from Synechococcus sp. (strain CC9605).